A 677-amino-acid chain; its full sequence is Sulfate transporter 2.2 (677 aa).

The Cytoplasmic portion of the chain corresponds to 1–110; sequence MQLSSLSHTS…QYKLNLFKKD (110 aa). A helical membrane pass occupies residues 111 to 131; it reads LMAGLTLASLCIPQSIGYANL. Over 132–133 the chain is Extracellular; sequence AG. A helical membrane pass occupies residues 134–154; sequence LDPEYGLYTSVVPPLIYSTMG. Over 155-158 the chain is Cytoplasmic; the sequence is TSRE. The helical transmembrane segment at 159–179 threads the bilayer; sequence LAIGPVAVVSLLLSSMVRDLQ. The Extracellular segment spans residues 180–190; sequence DPVTDPIAYRK. Residues 191–211 form a helical membrane-spanning segment; sequence IVFTVTFFAGAFQAIFGLFRL. Residues 212-213 lie on the Cytoplasmic side of the membrane; it reads GF. A helical transmembrane segment spans residues 214-234; that stretch reads LVDFLSHAALVGFMAGAAIVI. Residues 235 to 270 are Extracellular-facing; the sequence is GLQQLKGLFGLTHFTNKTDVVSVLSSVFHSLHHPWQ. Asparagine 250 carries N-linked (GlcNAc...) asparagine glycosylation. The chain crosses the membrane as a helical span at residues 271–291; it reads PLNFVIGSSFLIFILLARFIG. Over 292–296 the chain is Cytoplasmic; the sequence is KRNNK. A helical membrane pass occupies residues 297–317; sequence LFWIPAMAPLISVVLATLIVY. Residues 318–352 are Extracellular-facing; the sequence is LSNAESRGVKIVKHIKPGFNQLSVNQLQFKSPHLG. A helical transmembrane segment spans residues 353-373; sequence QIAKIGLISAIIALTEAIAVG. At 374-389 the chain is on the cytoplasmic side; sequence RSFATIKGYRLDGNKE. The helical transmembrane segment at 390 to 410 threads the bilayer; sequence MMAMGFMNIAGSLSSCYVATG. At 411–422 the chain is on the extracellular side; sequence SFSRTAVNFSAG. An N-linked (GlcNAc...) asparagine glycan is attached at asparagine 418. A helical transmembrane segment spans residues 423 to 443; it reads CETVVSNIVMAITVMISLEVL. Topologically, residues 444–446 are cytoplasmic; that stretch reads TRF. A helical membrane pass occupies residues 447–467; sequence LYFTPTAILASIILSALPGLI. The Extracellular portion of the chain corresponds to 468–482; it reads DVSGALHIWKLDKLD. The helical transmembrane segment at 483–503 threads the bilayer; it reads FLVLIAAFFGVLFASVEIGLL. At 504 to 677 the chain is on the cytoplasmic side; the sequence is LAVGISFARI…RARSTSHELC (174 aa). The 127-residue stretch at 540 to 666 folds into the STAS domain; that stretch reads YPMANKTAGL…MTVGEAVDIY (127 aa).

Belongs to the SLC26A/SulP transporter (TC 2.A.53) family. In terms of tissue distribution, expressed in the phloem in roots and in the phloem of vascular bundles in leaves.

The protein resides in the membrane. In terms of biological role, low-affinity H(+)/sulfate cotransporter that may be involved in the distribution of sulfate from vascular bundles to the palisade cells of the leaves. Plays a central role in the regulation of sulfate assimilation. In Arabidopsis thaliana (Mouse-ear cress), this protein is Sulfate transporter 2.2 (SULTR2;2).